The following is a 1170-amino-acid chain: RNA-binding protein 33 (1170 aa).

2 disordered regions span residues 1-152 (MAAA…EGHE) and 199-221 (KDIKEESDEEEEDDEESGRLRFK). An N-acetylalanine modification is found at Ala2. A compositionally biased stretch (basic and acidic residues) spans 20-36 (QFDKPGAERSWRRRAAD). Residues 37 to 49 (EDWDSELEDDLLG) show a composition bias toward acidic residues. Ser41 is modified (phosphoserine). Residues 82 to 108 (FSSQGVTISLNATSGMVTSFELSDNTN) show a composition bias toward polar residues. 2 stretches are compositionally biased toward acidic residues: residues 112–126 (GEQESEYEQEQGEDE) and 203–214 (EESDEEEEDDEE). Ser205 and Ser233 each carry phosphoserine. Disordered stretches follow at residues 259–708 (FEER…NSNL), 721–784 (MSSS…PDED), 833–863 (QLYAPPPPAEQEEQALSPSPTNGNPLLPFPG), and 942–1050 (AVPQ…VPPG). The segment covering 267-278 (KQGRYSSRRGGR) has biased composition (basic residues). The span at 289 to 306 (GDQRRESTERGRMKDHRP) shows a compositional bias: basic and acidic residues. Over residues 311–329 (TQPPVVPQAPPPPPPPPQQ) the composition is skewed to pro residues. Low complexity-rich tracts occupy residues 335-348 (LFQPQPLQPLLPVQ), 357-372 (QGMHMPPQLETPRMMM), and 394-403 (TVVTPVQVPL). Residues 419–433 (FPGPPEFPQHTPGPV) show a composition bias toward pro residues. The residue at position 470 (Arg470) is an Asymmetric dimethylarginine. Pro residues-rich tracts occupy residues 481–490 (SPPPPPPPPT), 554–568 (FIPPRQPFLPGPGQP), and 582–630 (LHPP…PQHP). Residues 632-642 (QHQHHHHHHHL) show a composition bias toward basic residues. Polar residues-rich tracts occupy residues 662–708 (QTAQ…NSNL) and 721–732 (MSSSRCSATPSA). 2 positions are modified to phosphoserine: Ser741 and Ser765. Residues 789-835 (LYRLKIEEQKRLREEILKQKELRRQQQAGARKKELLERLAQQQQQLY) are a coiled coil. A Phosphoserine modification is found at Ser951. Lys960 is covalently cross-linked (Glycyl lysine isopeptide (Lys-Gly) (interchain with G-Cter in SUMO2)). Phosphoserine occurs at positions 973 and 991. Arg1028 is subject to Asymmetric dimethylarginine; alternate. Arg1028 is modified (omega-N-methylarginine; alternate). The RRM domain occupies 1098-1170 (CVVSVEGLSS…SHINVALIVE (73 aa)).

As to quaternary structure, associates with the NXF1-NXT1 RNA export complex. Interacts with ALKBH5; facilitating ALKBH5 recruitment to m6A-containing transcripts. Interacts with SENP1; promoting ALKBH5 deSUMOylation and subsequent activation.

Its subcellular location is the nucleus. The protein localises to the cytoplasm. In terms of biological role, RNA reader protein, which recognizes and binds specific RNAs, thereby regulating RNA metabolic processes, such as mRNA export, mRNA stability and/or translation. Binds a subset of intronless RNAs containing GC-rich elements, such as NORAD, and promotes their nuclear export by recruiting target RNAs to components of the NXF1-NXT1 RNA export machinery. Specifically recognizes and binds N6-methyladenosine (m6A)-containing mRNAs, promoting their demethylation by ALKBH5. Acts as an molecular adapter, which (1) promotes ALKBH5 recruitment to m6A-containing transcripts and (2) activates ALKBH5 demethylase activity by recruiting SENP1, leading to ALKBH5 deSUMOylation and subsequent activation. The protein is RNA-binding protein 33 of Homo sapiens (Human).